A 583-amino-acid polypeptide reads, in one-letter code: Threonine--tRNA ligase (583 aa).

Residues 185–478 (DHRKLGRELD…LVEHYGGAFP (294 aa)) are catalytic. Residues C278, H329, and H455 each contribute to the Zn(2+) site.

Belongs to the class-II aminoacyl-tRNA synthetase family. As to quaternary structure, homodimer. Requires Zn(2+) as cofactor.

The protein resides in the cytoplasm. The enzyme catalyses tRNA(Thr) + L-threonine + ATP = L-threonyl-tRNA(Thr) + AMP + diphosphate + H(+). Catalyzes the attachment of threonine to tRNA(Thr) in a two-step reaction: L-threonine is first activated by ATP to form Thr-AMP and then transferred to the acceptor end of tRNA(Thr). Also edits incorrectly charged L-seryl-tRNA(Thr). The sequence is that of Threonine--tRNA ligase from Borrelia turicatae (strain 91E135).